A 281-amino-acid chain; its full sequence is UPF0162 protein PD_0709 (281 aa).

2 TPR repeats span residues 193–226 (VRIL…VPNQ) and 227–260 (PEAL…YPST).

Belongs to the UPF0162 family.

In Xylella fastidiosa (strain Temecula1 / ATCC 700964), this protein is UPF0162 protein PD_0709.